We begin with the raw amino-acid sequence, 185 residues long: ATP synthase subunit b (185 aa).

A helical transmembrane segment spans residues 26–46 (LVLIGFAILLFIVIKFVVPMF).

It belongs to the ATPase B chain family. As to quaternary structure, F-type ATPases have 2 components, F(1) - the catalytic core - and F(0) - the membrane proton channel. F(1) has five subunits: alpha(3), beta(3), gamma(1), delta(1), epsilon(1). F(0) has three main subunits: a(1), b(2) and c(10-14). The alpha and beta chains form an alternating ring which encloses part of the gamma chain. F(1) is attached to F(0) by a central stalk formed by the gamma and epsilon chains, while a peripheral stalk is formed by the delta and b chains.

The protein resides in the cell membrane. In terms of biological role, f(1)F(0) ATP synthase produces ATP from ADP in the presence of a proton or sodium gradient. F-type ATPases consist of two structural domains, F(1) containing the extramembraneous catalytic core and F(0) containing the membrane proton channel, linked together by a central stalk and a peripheral stalk. During catalysis, ATP synthesis in the catalytic domain of F(1) is coupled via a rotary mechanism of the central stalk subunits to proton translocation. Component of the F(0) channel, it forms part of the peripheral stalk, linking F(1) to F(0). The polypeptide is ATP synthase subunit b (Renibacterium salmoninarum (strain ATCC 33209 / DSM 20767 / JCM 11484 / NBRC 15589 / NCIMB 2235)).